Reading from the N-terminus, the 505-residue chain is Putative pentatricopeptide repeat-containing protein At1g26500 (505 aa).

7 PPR repeats span residues 145–179, 180–210, 214–248, 249–279, 285–319, 320–350, and 351–385; these read NDKT…GYLY, NVET…LKEF, DEIT…GFDV, DIEA…MVSK, DGGF…GVYV, DNLT…VENP, and DISI…GCEP.

It belongs to the PPR family. P subfamily.

The sequence is that of Putative pentatricopeptide repeat-containing protein At1g26500 from Arabidopsis thaliana (Mouse-ear cress).